The chain runs to 332 residues: UBA domain-containing protein Mud1 (332 aa).

Aspartate 127 is an active-site residue. Residues 246–298 are disordered; it reads GLGIEPASKASASSPNPQSGTRLGTKESVAPNNEGSSNPPSLVNPPTDPGLNS. Positions 251 to 264 are enriched in low complexity; the sequence is PASKASASSPNPQS. Over residues 275 to 286 the composition is skewed to polar residues; that stretch reads APNNEGSSNPPS. The UBA domain occupies 291 to 332; the sequence is PTDPGLNSKIAQLVSMGFDPLEAAQALDAANGDLDVAASFLL.

It belongs to the DDI1 family. In terms of assembly, homodimer. Interacts (via UBA domain) with polyubiquitin (polyUb) chains (via Lys-48-linked polyUbs). Has weak binding affinity for monoubiquitin. According to another report, has no affinity for monoubiquitin.

It is found in the cytoplasm. The protein localises to the cell membrane. Functionally, recognizes and binds polyubiquitin chains. Acts as a linker between the 19S proteasome and polyubiquitinated proteins via UBA domain interactions with ubiquitin for their subsequent degradation. Aspartic protease. Appears to act as negative regulator of constitutive exocytosis. May act at the level of secretory vesicle docking and fusion as a competitive inhibitor of SNARE assembly. Required for S-phase checkpoint control. This Schizosaccharomyces pombe (strain 972 / ATCC 24843) (Fission yeast) protein is UBA domain-containing protein Mud1.